A 394-amino-acid polypeptide reads, in one-letter code: Ribose-phosphate pyrophosphokinase 5, chloroplastic (394 aa).

Residues 1–33 constitute a chloroplast transit peptide; that stretch reads MASIVQPSPTFPALNLRRSSLIRPPSSVRFPLK. 4 residues coordinate Mg(2+): Asp202, His204, Asp213, and Asp217. The tract at residues 288–303 is binding of phosphoribosylpyrophosphate; that stretch reads GKVAIMVDDMIDTAGT.

Belongs to the ribose-phosphate pyrophosphokinase family.

It localises to the plastid. The protein resides in the chloroplast. The catalysed reaction is D-ribose 5-phosphate + ATP = 5-phospho-alpha-D-ribose 1-diphosphate + AMP + H(+). The protein is Ribose-phosphate pyrophosphokinase 5, chloroplastic (PRS5) of Arabidopsis thaliana (Mouse-ear cress).